A 329-amino-acid chain; its full sequence is MYVLGIESTAHTIGVGIVNERAEVLANEMHTYVPKEGGIHPREAARHHAEWGPRLVKRALEVAGLRPEDLDAVAYSAGPGLGPCLRTGAVMARALAAFYEKPLVPVNHSLAHIEIARAVTGFSKPVAIYVSGGSTIISAPAIKRYRVYGETLDIGLGNLLDTFAREVGIGPPFVKGGVHVVELCSEGAEEPADLPYTVQGVDLSFSGLLTAALRAWKKEDKKKVCYGLWETAYDMVVEVGERALAHSKLKEVVLVGGVAGSKRLQRKVALMSEERGVSFKPIPYELARDNGAMIAWTGLLYYKHGFTVAPEEAFVRQRWRLDEVEVPWL.

H108, H112, and Y129 together coordinate Fe cation. Residues Y129–G133, D161, E182, and S261 each bind substrate. Residue D289 participates in Fe cation binding.

The protein belongs to the KAE1 / TsaD family. Fe(2+) serves as cofactor.

The protein resides in the cytoplasm. It catalyses the reaction L-threonylcarbamoyladenylate + adenosine(37) in tRNA = N(6)-L-threonylcarbamoyladenosine(37) in tRNA + AMP + H(+). Functionally, required for the formation of a threonylcarbamoyl group on adenosine at position 37 (t(6)A37) in tRNAs that read codons beginning with adenine. Is probably involved in the transfer of the threonylcarbamoyl moiety of threonylcarbamoyl-AMP (TC-AMP) to the N6 group of A37. The polypeptide is tRNA N6-adenosine threonylcarbamoyltransferase (Ignicoccus hospitalis (strain KIN4/I / DSM 18386 / JCM 14125)).